The sequence spans 318 residues: Isoeugenol synthase 1 (318 aa).

Residues 10–13 (TGYI), 32–43 (ARPLTPDSTPSS), Arg-33, 84–86 (VPM), 109–111 (SEF), Lys-131, and 151–153 (NCF) contribute to the NADP(+) site. Lys-131 (proton donor/acceptor) is an active-site residue. Residue Pro-260 participates in substrate binding.

Belongs to the NmrA-type oxidoreductase family. In terms of tissue distribution, mostly expressed in petals, and, to a lower extent, in sepals, stamens and pistils.

It carries out the reaction (E)-isoeugenol + acetate + NADP(+) = (E)-coniferyl acetate + NADPH. Its pathway is aromatic compound metabolism; phenylpropanoid biosynthesis. Functionally, catalyzes the synthesis of the phenylpropene isoeugenol from coniferyl acetate. Phenylpropenes are the primary constituents of various essential plant oils. They are produced as antimicrobial and antianimal compounds, or as floral attractants of pollinators. Isoeugenol is a characteristic aromatic constituent of spices and a floral volatile compound. The protein is Isoeugenol synthase 1 of Clarkia breweri (Fairy fans).